The chain runs to 591 residues: Paralemmin-3 (591 aa).

4 consecutive repeats follow at residues 171-174 (EKNK), 183-186 (EKNQ), 224-227 (EKNQ), and 234-237 (KNQD). A compositionally biased stretch (polar residues) spans 282–293 (DQTQSTSDQNME). 3 disordered regions span residues 282–317 (DQTQ…TKDQ), 332–413 (KGTT…QNQD), and 515–591 (PDLK…CVVM). 2 stretches are compositionally biased toward basic and acidic residues: residues 306 to 317 (SQSEGKIQTKDQ) and 349 to 383 (EPKE…DMDP). Composition is skewed to polar residues over residues 385–413 (QLST…QNQD) and 528–542 (QESS…TIAQ). The span at 543–554 (SSSAEGNSSPES) shows a compositional bias: low complexity. The segment covering 559–575 (QKSQGTDSQQGGNTATQ) has biased composition (polar residues). Positions 579–583 (RRKKK) match the Nuclear localization signal motif. Residues C585 and C587 are each lipidated (S-palmitoyl cysteine). C588 is subject to Cysteine methyl ester. C588 carries the S-farnesyl cysteine lipid modification. The propeptide at 589 to 591 (VVM) is removed in mature form.

Belongs to the paralemmin family. May be phosphorylated during oocyte maturation. In terms of processing, palmitoylated on Cys-585 and Cys-587 and prenylated on Cys-588; which is required for membrane association. In Xenopus oocyte, in the central nervous system cells of tadpoles and adult frogs, and transiently in epithelial cells of stomach and gut of tadpoles. Highly expressed in kidney.

The protein localises to the cytoplasm. The protein resides in the nucleus. Its subcellular location is the cell membrane. Functionally, maternal ATP-binding protein that may have multiple functions during development, one of which may be associated with the development and maintenance of the central nervous system. The sequence is that of Paralemmin-3 (palm3) from Xenopus laevis (African clawed frog).